The following is a 527-amino-acid chain: tRNA (uracil(54)-C(5))-methyltransferase (527 aa).

The TRAM domain occupies 107–167 (PFERFQEIEV…DTYALADFLE (61 aa)). 4 residues coordinate [4Fe-4S] cluster: C182, C188, C191, and C276. The S-adenosyl-L-methionine site is built by Q347, Y383, E404, and D451. Residue C478 is the Nucleophile of the active site. The active-site Proton acceptor is the E517.

This sequence belongs to the class I-like SAM-binding methyltransferase superfamily. RNA M5U methyltransferase family.

The catalysed reaction is uridine(54) in tRNA + S-adenosyl-L-methionine = 5-methyluridine(54) in tRNA + S-adenosyl-L-homocysteine + H(+). Functionally, catalyzes the formation of 5-methyl-uridine at position 54 (m5U54) in all tRNA. May also have a role in tRNA stabilization or maturation. The chain is tRNA (uracil(54)-C(5))-methyltransferase from Schizosaccharomyces pombe (strain 972 / ATCC 24843) (Fission yeast).